A 139-amino-acid polypeptide reads, in one-letter code: Protein archease (139 aa).

Residues Asp-12, Asp-138, and Ile-139 each contribute to the Ca(2+) site.

Belongs to the archease family.

Its function is as follows. Activates the tRNA-splicing ligase complex by facilitating the enzymatic turnover of catalytic subunit RtcB. Acts by promoting the guanylylation of RtcB, a key intermediate step in tRNA ligation. Can also alter the NTP specificity of RtcB such that ATP, dGTP or ITP is used efficiently. The protein is Protein archease of Saccharolobus solfataricus (strain ATCC 35092 / DSM 1617 / JCM 11322 / P2) (Sulfolobus solfataricus).